We begin with the raw amino-acid sequence, 307 residues long: NmrA-like family domain-containing oxidoreductase flvB (307 aa).

Residues 4-9 (LITGAT), 32-36 (SSSSP), 53-54 (DY), 74-76 (STN), and 148-151 (YVEG) contribute to the NADP(+) site.

It belongs to the NmrA-type oxidoreductase family.

The enzyme catalyses (2S)-5,5-dimethyl-2,3,4,5-tetrahydropyridine-2,6-dicarboxylate + NADPH + 2 H(+) = (6S)-3,3-dimethylpiperidine-2,6-dicarboxylate + NADP(+). The catalysed reaction is (2S)-5,5-dimethyl-2,3,4,5-tetrahydropyridine-2,6-dicarboxylate + NADH + 2 H(+) = (6S)-3,3-dimethylpiperidine-2,6-dicarboxylate + NAD(+). Its pathway is secondary metabolite biosynthesis; terpenoid biosynthesis. NmrA-like family domain-containing oxidoreductase; part of the gene cluster that mediates the biosynthesis of flavunoidine, an alkaloidal terpenoid with a tetracyclic cage-like core connected to dimethylcadaverine via a C-N bond and acylated with 5,5-dimethyl-L-pipecolate. The tetracyclic core is synthesized by the terpene cyclase flvE and the cytochrome P450 monooxygenase flvD. The terpene cyclase flvE catalyzes the cyclization of farnesyl pyrophosphate (FPP) to form (1R,4R,5S)-(+)-acoradiene and the cytochrome P450 monooxygenase flvD is then responsible for oxidative conversion of (1R,4R,5S)-(+)-acoradiene into the tetracyclic cage present in the final product flavunoidine. In parallel, the N-methyltransferase flvH dimethylates L-lysine to give N,N-dimethyl-L-Lysin which is decarboxylated by flvG to afford dimethylcadaverine. The terpene cyclase-like protein flvF is the enzyme that attaches the dimethylcadaverine precusor at the C-7 of the tetracyclic cage to yield pre-flavunoidine. The cytochrome monooxygenase flvC hydroxylates the C-10 position of pre-flavunoidine whereas the NRPS flvI acylates the terpenoid core at the hydroxylated C-10 with dimethylpipecolate to yield final flavunoidine. The bifunctional enzyme flvA and the dehydrogenase flvB are responsible for the synthesis of the dimethylpipecolate precursor. The PLP-dependent lyase domain of flvA might use L-O-acetyl-homoserine and alpha-keto-isovalerate to form an intermediary ketone that can cyclize intramolecularly to yield an imine. The imine can be reduced by flvB to yield the 6-carboxylated pipecolate. The C-terminal alpha-KG-dependent oxygenase domain of flvA is then proposed to catalyze the decarboxylation to yield dimethylpipecolate. The polypeptide is NmrA-like family domain-containing oxidoreductase flvB (Aspergillus flavus (strain ATCC 200026 / FGSC A1120 / IAM 13836 / NRRL 3357 / JCM 12722 / SRRC 167)).